A 230-amino-acid polypeptide reads, in one-letter code: Stachydrine N-demethylase reductase subunit Stc3 (230 aa).

The protein belongs to the non-flavoprotein flavin reductase family. As to quaternary structure, the system is probably composed of an oxygenase subunit (Stc2) and two reductase subunits (Stc3 and Stc4).

Functionally, reductase involved in the catabolism of stachydrine (L-proline betaine), a source of carbon and nitrogen. Part of a Rieske-type oxygenase system that catalyzes the demethylation of stachydrine to produce N-methyl-L-proline (monomethylproline). This subunit is probably involved in the transfer of electrons from NAD(P)H to the catalytic subunit Stc2. This is Stachydrine N-demethylase reductase subunit Stc3 from Rhizobium meliloti (strain 1021) (Ensifer meliloti).